A 282-amino-acid chain; its full sequence is 2-dehydro-3-deoxyphosphooctonate aldolase (282 aa).

The protein belongs to the KdsA family.

Its subcellular location is the cytoplasm. The enzyme catalyses D-arabinose 5-phosphate + phosphoenolpyruvate + H2O = 3-deoxy-alpha-D-manno-2-octulosonate-8-phosphate + phosphate. Its pathway is carbohydrate biosynthesis; 3-deoxy-D-manno-octulosonate biosynthesis; 3-deoxy-D-manno-octulosonate from D-ribulose 5-phosphate: step 2/3. The protein operates within bacterial outer membrane biogenesis; lipopolysaccharide biosynthesis. The polypeptide is 2-dehydro-3-deoxyphosphooctonate aldolase (Bartonella bacilliformis (strain ATCC 35685 / KC583 / Herrer 020/F12,63)).